The chain runs to 597 residues: Arginine--tRNA ligase (597 aa).

The 'HIGH' region signature appears at 138–148; sequence ANPTGPMHVGH.

Belongs to the class-I aminoacyl-tRNA synthetase family. Monomer.

Its subcellular location is the cytoplasm. The enzyme catalyses tRNA(Arg) + L-arginine + ATP = L-arginyl-tRNA(Arg) + AMP + diphosphate. This is Arginine--tRNA ligase from Rhodopseudomonas palustris (strain ATCC BAA-98 / CGA009).